Reading from the N-terminus, the 120-residue chain is Protein p14.5 (120 aa).

Disordered stretches follow at residues 1–27 (MADFNSPIQYLKEDSRDRTSIGSLEYD) and 80–120 (REFT…HKSK). Ala2 carries the N-acetylalanine; by host modification. Over residues 103–120 (KPKKKKHLFPKLSSHKSK) the composition is skewed to basic residues.

It belongs to the asfivirus structural protein p14.5 family. Interacts with the major capsid protein. Interacts with host IRF3; this interaction interferes with the recruitment of IRF3 to TBK1. Post-translationally, acetylated.

Its subcellular location is the virion. Functionally, structural protein required for transport of intracellular particles from the assembly sites to the plasma membrane. Binds to both ssDNA and dsDNA. Suppressed the activation of the cGAS/STING pathway by interfering with the recruitment of IRF3 to TBK1, which in turn suppresses IRF3 phosphorylation, decreasing interferon production. This Ornithodoros (relapsing fever ticks) protein is Protein p14.5.